The primary structure comprises 307 residues: 2,4-diacetylphloroglucinol hydrolase (307 aa).

Zn(2+) contacts are provided by His142, Glu173, His283, and Glu287.

This sequence belongs to the DAPG/phloretin hydrolase family. It depends on Zn(2+) as a cofactor.

The enzyme catalyses 2,4-diacetylphloroglucinol + H2O = 2-acetylphloroglucinol + acetate. Activity is strongly reduced by pyoluteorin, an antifungal compound produced by the bacterium. Functionally, hydrolase that specifically degrades the potent antimicrobial compound 2,4-diacetylphloroglucinol (DAPG) to equimolar amounts of mildly toxic monoacetylphloroglucinol (MAPG) and acetate. Does not degrade other compounds with structures similar to DAPG, such as MAPG and triacetylphloroglucinol, suggesting strict substrate specificity. Degradation of DAPG to MAPG may provide an additional means of fine-tuning levels of this antibiotic or may help avoid accumulation of a metabolite that at high levels may become toxic to the producing bacterium. The polypeptide is 2,4-diacetylphloroglucinol hydrolase (Pseudomonas protegens (strain DSM 19095 / LMG 27888 / CFBP 6595 / CHA0)).